A 178-amino-acid chain; its full sequence is Crossover junction endodeoxyribonuclease RuvC (178 aa).

Residues Asp7, Glu67, and Asp139 contribute to the active site. Asp7, Glu67, and Asp139 together coordinate Mg(2+).

This sequence belongs to the RuvC family. Homodimer which binds Holliday junction (HJ) DNA. The HJ becomes 2-fold symmetrical on binding to RuvC with unstacked arms; it has a different conformation from HJ DNA in complex with RuvA. In the full resolvosome a probable DNA-RuvA(4)-RuvB(12)-RuvC(2) complex forms which resolves the HJ. Mg(2+) serves as cofactor.

It is found in the cytoplasm. It catalyses the reaction Endonucleolytic cleavage at a junction such as a reciprocal single-stranded crossover between two homologous DNA duplexes (Holliday junction).. In terms of biological role, the RuvA-RuvB-RuvC complex processes Holliday junction (HJ) DNA during genetic recombination and DNA repair. Endonuclease that resolves HJ intermediates. Cleaves cruciform DNA by making single-stranded nicks across the HJ at symmetrical positions within the homologous arms, yielding a 5'-phosphate and a 3'-hydroxyl group; requires a central core of homology in the junction. The consensus cleavage sequence is 5'-(A/T)TT(C/G)-3'. Cleavage occurs on the 3'-side of the TT dinucleotide at the point of strand exchange. HJ branch migration catalyzed by RuvA-RuvB allows RuvC to scan DNA until it finds its consensus sequence, where it cleaves and resolves the cruciform DNA. The chain is Crossover junction endodeoxyribonuclease RuvC from Trichlorobacter lovleyi (strain ATCC BAA-1151 / DSM 17278 / SZ) (Geobacter lovleyi).